The sequence spans 176 residues: Flavodoxin (176 aa).

In terms of domain architecture, Flavodoxin-like spans I4 to K172.

It belongs to the flavodoxin family. FMN is required as a cofactor.

In terms of biological role, low-potential electron donor to a number of redox enzymes. NifF is the electron donor to nitrogenase. The protein is Flavodoxin (nifF) of Klebsiella pneumoniae.